The sequence spans 461 residues: tRNA modification GTPase MnmE (461 aa).

(6S)-5-formyl-5,6,7,8-tetrahydrofolate is bound by residues Arg-22, Glu-87, and Arg-126. The 161-residue stretch at 222-382 folds into the TrmE-type G domain; that stretch reads GLKTVIVGKP…LEETIFNMVV (161 aa). K(+) is bound at residue Asn-232. GTP is bound by residues 232-237, 251-257, and 276-279; these read NVGKSS, TDIPGTT, and DTAG. Ser-236 serves as a coordination point for Mg(2+). K(+) is bound by residues Thr-251, Ile-253, and Thr-256. Residue Thr-257 coordinates Mg(2+). Lys-461 provides a ligand contact to (6S)-5-formyl-5,6,7,8-tetrahydrofolate.

This sequence belongs to the TRAFAC class TrmE-Era-EngA-EngB-Septin-like GTPase superfamily. TrmE GTPase family. In terms of assembly, homodimer. Heterotetramer of two MnmE and two MnmG subunits. K(+) serves as cofactor.

It localises to the cytoplasm. Its function is as follows. Exhibits a very high intrinsic GTPase hydrolysis rate. Involved in the addition of a carboxymethylaminomethyl (cmnm) group at the wobble position (U34) of certain tRNAs, forming tRNA-cmnm(5)s(2)U34. The polypeptide is tRNA modification GTPase MnmE (Desulforamulus reducens (strain ATCC BAA-1160 / DSM 100696 / MI-1) (Desulfotomaculum reducens)).